An 878-amino-acid chain; its full sequence is Probable outer membrane protein PmpI (878 aa).

Residues 1–24 (MRPDHMNFCCLCAAILSSTAVLFG) form the signal peptide. Residues 360–371 (SSKESPLPSSLQ) are compositionally biased toward low complexity. Residues 360-381 (SSKESPLPSSLQASVTSPTPAT) form a disordered region. Polar residues predominate over residues 372-381 (ASVTSPTPAT). The Autotransporter domain maps to 602–878 (GGAYLFGTWG…SLDLGTTYRF (277 aa)).

Belongs to the PMP outer membrane protein family.

It localises to the secreted. The protein resides in the cell wall. The protein localises to the cell outer membrane. The sequence is that of Probable outer membrane protein PmpI (pmpI) from Chlamydia trachomatis serovar D (strain ATCC VR-885 / DSM 19411 / UW-3/Cx).